The chain runs to 348 residues: Mannonate dehydratase (348 aa).

Belongs to the mannonate dehydratase family. Fe(2+) is required as a cofactor. Mn(2+) serves as cofactor.

The enzyme catalyses D-mannonate = 2-dehydro-3-deoxy-D-gluconate + H2O. It participates in carbohydrate metabolism; pentose and glucuronate interconversion. Its function is as follows. Catalyzes the dehydration of D-mannonate. In Streptococcus agalactiae serotype Ia (strain ATCC 27591 / A909 / CDC SS700), this protein is Mannonate dehydratase.